The primary structure comprises 201 residues: NAD(P)H dehydrogenase (quinone) (201 aa).

The 189-residue stretch at 4–192 (VLVLYYSSYG…TIARFQGQHI (189 aa)) folds into the Flavodoxin-like domain. FMN contacts are provided by residues 10–15 (SSYGHV) and 80–82 (TRF). Tyrosine 12 contributes to the NAD(+) binding site. Substrate is bound at residue tryptophan 100. FMN is bound by residues 115-121 (STASQHG) and histidine 136.

The protein belongs to the WrbA family. Requires FMN as cofactor.

It catalyses the reaction a quinone + NADH + H(+) = a quinol + NAD(+). The enzyme catalyses a quinone + NADPH + H(+) = a quinol + NADP(+). This is NAD(P)H dehydrogenase (quinone) from Chromohalobacter salexigens (strain ATCC BAA-138 / DSM 3043 / CIP 106854 / NCIMB 13768 / 1H11).